The primary structure comprises 285 residues: Small ribosomal subunit protein mS23 (285 aa).

The protein belongs to the mitochondrion-specific ribosomal protein mS23 family. In terms of assembly, component of the mitochondrial small ribosomal subunit.

The protein localises to the mitochondrion. This chain is Small ribosomal subunit protein mS23 (RSM25), found in Debaryomyces hansenii (strain ATCC 36239 / CBS 767 / BCRC 21394 / JCM 1990 / NBRC 0083 / IGC 2968) (Yeast).